Reading from the N-terminus, the 131-residue chain is Small ribosomal subunit protein uS11 (131 aa).

It belongs to the universal ribosomal protein uS11 family. In terms of assembly, part of the 30S ribosomal subunit. Interacts with proteins S7 and S18. Binds to IF-3.

Its function is as follows. Located on the platform of the 30S subunit, it bridges several disparate RNA helices of the 16S rRNA. Forms part of the Shine-Dalgarno cleft in the 70S ribosome. This chain is Small ribosomal subunit protein uS11, found in Chromobacterium violaceum (strain ATCC 12472 / DSM 30191 / JCM 1249 / CCUG 213 / NBRC 12614 / NCIMB 9131 / NCTC 9757 / MK).